A 556-amino-acid chain; its full sequence is Glutamine--tRNA ligase (556 aa).

A 'HIGH' region motif is present at residues 33–43; that stretch reads PEPNGYLHIGH. ATP is bound by residues 34-36 and 40-46; these read EPN and HIGHAKS. L-glutamine is bound by residues aspartate 66 and tyrosine 210. ATP-binding positions include threonine 229, 259–260, and 267–269; these read RL and MSK. The 'KMSKS' region signature appears at 266–270; that stretch reads VMSKR.

The protein belongs to the class-I aminoacyl-tRNA synthetase family. In terms of assembly, monomer.

Its subcellular location is the cytoplasm. It carries out the reaction tRNA(Gln) + L-glutamine + ATP = L-glutaminyl-tRNA(Gln) + AMP + diphosphate. The polypeptide is Glutamine--tRNA ligase (Clostridium kluyveri (strain ATCC 8527 / DSM 555 / NBRC 12016 / NCIMB 10680 / K1)).